We begin with the raw amino-acid sequence, 114 residues long: Large ribosomal subunit protein bL19 (114 aa).

Belongs to the bacterial ribosomal protein bL19 family.

Its function is as follows. This protein is located at the 30S-50S ribosomal subunit interface and may play a role in the structure and function of the aminoacyl-tRNA binding site. The sequence is that of Large ribosomal subunit protein bL19 from Halalkalibacterium halodurans (strain ATCC BAA-125 / DSM 18197 / FERM 7344 / JCM 9153 / C-125) (Bacillus halodurans).